Here is a 449-residue protein sequence, read N- to C-terminus: tRNA modification GTPase MnmE (449 aa).

Arg24, Glu81, and Lys121 together coordinate (6S)-5-formyl-5,6,7,8-tetrahydrofolate. The TrmE-type G domain occupies 218–375; that stretch reads GLVVAITGPP…LIAALGKFAA (158 aa). Residues 228 to 233, 247 to 253, and 272 to 275 contribute to the GTP site; these read NVGKST, SPHAGTT, and DTAG. Residues Ser232 and Thr253 each coordinate Mg(2+). Lys449 lines the (6S)-5-formyl-5,6,7,8-tetrahydrofolate pocket.

Belongs to the TRAFAC class TrmE-Era-EngA-EngB-Septin-like GTPase superfamily. TrmE GTPase family. As to quaternary structure, homodimer. Heterotetramer of two MnmE and two MnmG subunits. Requires K(+) as cofactor.

The protein localises to the cytoplasm. Functionally, exhibits a very high intrinsic GTPase hydrolysis rate. Involved in the addition of a carboxymethylaminomethyl (cmnm) group at the wobble position (U34) of certain tRNAs, forming tRNA-cmnm(5)s(2)U34. This chain is tRNA modification GTPase MnmE, found in Rhodopseudomonas palustris (strain BisB18).